The following is a 433-amino-acid chain: CinA-like protein (433 aa).

The protein belongs to the CinA family.

This is CinA-like protein from Prochlorococcus marinus subsp. pastoris (strain CCMP1986 / NIES-2087 / MED4).